We begin with the raw amino-acid sequence, 295 residues long: uncharacterized protein (295 aa).

NAD(+)-binding positions include 11–25 and Thr101; that span reads GYIG…MAKR. The active site involves Lys176. NAD(+) is bound at residue Lys252.

Belongs to the HIBADH-related family.

This is an uncharacterized protein from Mycobacterium tuberculosis (strain CDC 1551 / Oshkosh).